A 503-amino-acid polypeptide reads, in one-letter code: Glutamyl-tRNA(Gln) amidotransferase subunit A (503 aa).

Active-site charge relay system residues include Lys-79 and Ser-154. Ser-178 (acyl-ester intermediate) is an active-site residue.

It belongs to the amidase family. GatA subfamily. As to quaternary structure, heterotrimer of A, B and C subunits.

It catalyses the reaction L-glutamyl-tRNA(Gln) + L-glutamine + ATP + H2O = L-glutaminyl-tRNA(Gln) + L-glutamate + ADP + phosphate + H(+). Its function is as follows. Allows the formation of correctly charged Gln-tRNA(Gln) through the transamidation of misacylated Glu-tRNA(Gln) in organisms which lack glutaminyl-tRNA synthetase. The reaction takes place in the presence of glutamine and ATP through an activated gamma-phospho-Glu-tRNA(Gln). The polypeptide is Glutamyl-tRNA(Gln) amidotransferase subunit A (Agathobacter rectalis (strain ATCC 33656 / DSM 3377 / JCM 17463 / KCTC 5835 / VPI 0990) (Eubacterium rectale)).